A 415-amino-acid chain; its full sequence is Corticotropin-releasing factor receptor 1 (415 aa).

The N-terminal stretch at 1 to 23 (MARHPQLRLVKALLLLGLNPVSA) is a signal peptide. At 24 to 111 (SLQDQHCESL…CQEILNEEKK (88 aa)) the chain is on the extracellular side. 3 disulfides stabilise this stretch: C30/C54, C44/C87, and C68/C102. 3 N-linked (GlcNAc...) asparagine glycosylation sites follow: N38, N78, and N98. Residues 99–108 (YSECQEILNE) are important for peptide agonist binding. A helical transmembrane segment spans residues 112–142 (SKVHYHVAVIINYLGHCISLVALLVAFVLFL). Residues 143 to 149 (RLRSIRC) lie on the Cytoplasmic side of the membrane. A helical membrane pass occupies residues 150-174 (LRNIIHWNLISAFILRNATWFVVQL). At 175-189 (TMSPEVHQSNVGWCR) the chain is on the extracellular side. C188 and C258 are joined by a disulfide. The helical transmembrane segment at 190–218 (LVTAAYNYFHVTNFFWMFGEGCYLHTAIV) threads the bilayer. Over 219–225 (LTYSTDR) the chain is Cytoplasmic. The chain crosses the membrane as a helical span at residues 226 to 253 (LRKWMFICIGWGVPFPIIVAWAIGKLYY). The Extracellular segment spans residues 254–269 (DNEKCWFGKRPGVYTD). A helical membrane pass occupies residues 270–295 (YIYQGPMILVLLINFIFLFNIVRILM). Residues 280–290 (LLINFIFLFNI) form an important for antagonist binding region. The Cytoplasmic portion of the chain corresponds to 296–306 (TKLRASTTSET). Phosphoserine; by PKA is present on S301. Residues 307-331 (IQYRKAVKATLVLLPLLGITYMLFF) form a helical membrane-spanning segment. Residues 332–338 (VNPGEDE) are Extracellular-facing. The helical transmembrane segment at 339–368 (VSRVVFIYFNSFLESFQGFFVSVFYCFLNS) threads the bilayer. Residues 369–415 (EVRSAIRKRWHRWQDKHSIRARVARAMSIPTSPTRVSFHSIKQSTAV) lie on the Cytoplasmic side of the membrane.

It belongs to the G-protein coupled receptor 2 family. As to quaternary structure, heterodimer; heterodimerizes with GPER1. Interacts (via N-terminal extracellular domain) with CRH and UCN. Interacts with DLG1; this inhibits endocytosis of CRHR1 after agonist binding. Post-translationally, C-terminal Ser or Thr residues may be phosphorylated. In terms of processing, phosphorylation at Ser-301 by PKA prevents maximal coupling to Gq-protein, and thereby negatively regulates downstream signaling. As to expression, expressed abundantly in the pituitary, cerebral cortex, hippocampus, amygdala and cerebellum.

The protein resides in the cell membrane. It localises to the endosome. In terms of biological role, G-protein coupled receptor for CRH (corticotropin-releasing factor) and UCN (urocortin). Has high affinity for CRH and UCN. Ligand binding causes a conformation change that triggers signaling via guanine nucleotide-binding proteins (G proteins) and down-stream effectors, such as adenylate cyclase. Promotes the activation of adenylate cyclase, leading to increased intracellular cAMP levels. Inhibits the activity of the calcium channel CACNA1H. Required for normal embryonic development of the adrenal gland and for normal hormonal responses to stress. Plays a role in the response to anxiogenic stimuli. The protein is Corticotropin-releasing factor receptor 1 (CRHR1) of Macaca mulatta (Rhesus macaque).